The following is a 516-amino-acid chain: Beta-glucosidase 1 (516 aa).

The signal sequence occupies residues 1–21 (MGHRLVVVLLLALLVAGAARA). Q68 contacts a beta-D-glucoside. N96 is a glycosylation site (N-linked (GlcNAc...) asparagine). A beta-D-glucoside contacts are provided by residues H169 and 214–215 (NE). E215 acts as the Proton donor in catalysis. C234 and C237 are joined by a disulfide. N-linked (GlcNAc...) asparagine glycosylation is present at N290. Residue Y353 participates in a beta-D-glucoside binding. N364 carries N-linked (GlcNAc...) asparagine glycosylation. E424 is a binding site for a beta-D-glucoside. Residue E424 is the Nucleophile of the active site. N-linked (GlcNAc...) asparagine glycosylation occurs at N432. A beta-D-glucoside contacts are provided by residues W471, 478–479 (EW), and F487.

Belongs to the glycosyl hydrolase 1 family.

It catalyses the reaction Hydrolysis of terminal, non-reducing beta-D-glucosyl residues with release of beta-D-glucose.. The polypeptide is Beta-glucosidase 1 (BGLU1) (Oryza sativa subsp. japonica (Rice)).